Reading from the N-terminus, the 670-residue chain is Catalase (670 aa).

Active-site residues include His-61 and Asn-132. Tyr-345 contacts heme.

Belongs to the catalase family. In terms of assembly, homotetramer. It depends on heme as a cofactor.

It localises to the peroxisome matrix. It carries out the reaction 2 H2O2 = O2 + 2 H2O. Catalyzes the degradation of hydrogen peroxide (H(2)O(2)) generated by peroxisomal oxidases to water and oxygen, thereby protecting cells from the toxic effects of hydrogen peroxide. This is Catalase from Penicillium janthinellum (Penicillium vitale).